Here is a 275-residue protein sequence, read N- to C-terminus: NH(3)-dependent NAD(+) synthetase (275 aa).

46–53 (GISGGQDS) is a binding site for ATP. Asp52 lines the Mg(2+) pocket. Residue Arg140 coordinates deamido-NAD(+). ATP is bound at residue Thr160. Position 165 (Glu165) interacts with Mg(2+). Residues Lys173 and Asp180 each coordinate deamido-NAD(+). Residues Lys189 and Thr211 each coordinate ATP. Position 260 to 261 (260 to 261 (HK)) interacts with deamido-NAD(+).

This sequence belongs to the NAD synthetase family. Homodimer.

The enzyme catalyses deamido-NAD(+) + NH4(+) + ATP = AMP + diphosphate + NAD(+) + H(+). It functions in the pathway cofactor biosynthesis; NAD(+) biosynthesis; NAD(+) from deamido-NAD(+) (ammonia route): step 1/1. Functionally, catalyzes the ATP-dependent amidation of deamido-NAD to form NAD. Uses ammonia as a nitrogen source. The protein is NH(3)-dependent NAD(+) synthetase of Salmonella agona (strain SL483).